The following is a 167-amino-acid chain: MTAMKDIYIDKVVVHMGVGESGERLVKAEDLVKQITGQKPVRTIAKRTQPAFGIRKGAPIGCKVTLRRENAEKFITTALDIIERRLAPSQFDRTGNVSFGIEEHTDFPGMSYDPTIGIYGMDVNVVLEYKGARIARRSVERRKLPADQKVNKEEAIAFMCENYRVEV.

Belongs to the universal ribosomal protein uL5 family. As to quaternary structure, part of the 50S ribosomal subunit; contacts the 5S rRNA and probably tRNA. Forms a bridge to the 30S subunit in the 70S ribosome.

This is one of the proteins that bind and probably mediate the attachment of the 5S RNA into the large ribosomal subunit, where it forms part of the central protuberance. In the 70S ribosome it contacts protein S13 of the 30S subunit (bridge B1b), connecting the 2 subunits; this bridge is implicated in subunit movement. May contact the P site tRNA; the 5S rRNA and some of its associated proteins might help stabilize positioning of ribosome-bound tRNAs. In Methanoculleus marisnigri (strain ATCC 35101 / DSM 1498 / JR1), this protein is Large ribosomal subunit protein uL5.